Reading from the N-terminus, the 382-residue chain is Opsin Rh3 (382 aa).

Over 1 to 56 (MEYHNVSSVLGNVSSVLRPDARLSAESRLLGWNVPPDELRHIPEHWLIYPEPPESM) the chain is Extracellular. Asparagine 12 is a glycosylation site (N-linked (GlcNAc...) asparagine). A helical membrane pass occupies residues 57-81 (NYLLGTLYIFFTVISMIGNGLVMWV). Residues 82 to 93 (FSAAKSLRTPSN) lie on the Cytoplasmic side of the membrane. A helical transmembrane segment spans residues 94-118 (ILVINLAFCDFMMMIKTPIFIYNSF). The Extracellular portion of the chain corresponds to 119 to 132 (HQGYALGHLGCQIF). An intrachain disulfide couples cysteine 129 to cysteine 206. The helical transmembrane segment at 133-152 (GVIGSYTGIAAGATNAFIAY) threads the bilayer. Residues 153 to 170 (DRYNVITRPMEGKMTHGK) are Cytoplasmic-facing. Residues 171-195 (AIAMIIFIYLYATPWVVACYTESWG) traverse the membrane as a helical segment. The Extracellular segment spans residues 196–219 (RFVPEGYLTSCTFDYLTDNFDTRL). A helical transmembrane segment spans residues 220 to 247 (FVACIFFFSFVCPTTMITYYYSQIVGHV). At 248–283 (FSHEKALRDQAKKMNVDSLRSNVDKSKEAAEIRIAK) the chain is on the cytoplasmic side. A helical membrane pass occupies residues 284–307 (AAITICFLFFASWTPYGVMSLIGA). Over 308–315 (FGDKTLLT) the chain is Extracellular. A helical membrane pass occupies residues 316–340 (PGATMIPACTCKMVACIDPFVYAIS). N6-(retinylidene)lysine is present on lysine 327. Residues 341-382 (HPRYRMELQKRCPWLAISEKAPESAAAISTSTTQEQQQTTAA) lie on the Cytoplasmic side of the membrane.

It belongs to the G-protein coupled receptor 1 family. Opsin subfamily. Post-translationally, phosphorylated on some or all of the serine and threonine residues present in the C-terminal region.

The protein resides in the membrane. Visual pigments are the light-absorbing molecules that mediate vision. They consist of an apoprotein, opsin, covalently linked to cis-retinal. The polypeptide is Opsin Rh3 (Rh3) (Drosophila pseudoobscura pseudoobscura (Fruit fly)).